The primary structure comprises 219 residues: Histidinol-phosphate aminotransferase (219 aa).

It belongs to the class-II pyridoxal-phosphate-dependent aminotransferase family. Histidinol-phosphate aminotransferase subfamily. In terms of assembly, homodimer. The cofactor is pyridoxal 5'-phosphate.

It carries out the reaction L-histidinol phosphate + 2-oxoglutarate = 3-(imidazol-4-yl)-2-oxopropyl phosphate + L-glutamate. The protein operates within amino-acid biosynthesis; L-histidine biosynthesis; L-histidine from 5-phospho-alpha-D-ribose 1-diphosphate: step 7/9. In Mycolicibacterium smegmatis (Mycobacterium smegmatis), this protein is Histidinol-phosphate aminotransferase (hisC).